Reading from the N-terminus, the 128-residue chain is Small ribosomal subunit protein uS9 (128 aa).

It belongs to the universal ribosomal protein uS9 family.

This chain is Small ribosomal subunit protein uS9, found in Amoebophilus asiaticus (strain 5a2).